We begin with the raw amino-acid sequence, 673 residues long: Beta-galactosidase GalA (673 aa).

R105 is a binding site for substrate. Zn(2+) is bound at residue C109. N143 is a binding site for substrate. The Proton donor role is filled by E144. Zn(2+)-binding residues include C149, C151, and C154. The active-site Nucleophile is the E308. Residues W316 and 356–359 (EKFH) contribute to the substrate site.

Belongs to the glycosyl hydrolase 42 family. In terms of assembly, homodimer.

It catalyses the reaction Hydrolysis of terminal non-reducing beta-D-galactose residues in beta-D-galactosides.. Inhibited by hydrolysis end products D-galactose and D-glucose. The hydrolysis of o-nitrophenyl-beta-D-galactopyranoside (ONPG) is slightly activated by monovalent ions, Na(+) and K(+). Concentrations of these ions in the range of 1-100 mM exert the stimulating effects. The presence of 1 mM Mn(2+) together with the presence of 10 mM Na(+) slightly stimulates the activity, while presence of 10 mM Mn(2+) inhibits the activity by about 40%. Catalyzes the hydrolysis of lactose to its constituent monosaccharides glucose and galactose. Possesses a low level of transgalactosylation activity for the production of galacto-oligosaccharides (GOS) from lactose. The sequence is that of Beta-galactosidase GalA from Bacillus licheniformis (strain ATCC 14580 / DSM 13 / JCM 2505 / CCUG 7422 / NBRC 12200 / NCIMB 9375 / NCTC 10341 / NRRL NRS-1264 / Gibson 46).